A 166-amino-acid polypeptide reads, in one-letter code: Interferon gamma (166 aa).

Residues 1 to 23 (MKYTSYFLALLLCVLLGFSGSYG) form the signal peptide. At Gln-24 the chain carries Pyrrolidone carboxylic acid. Residues Asn-39 and Asn-106 are each glycosylated (N-linked (GlcNAc...) asparagine).

Belongs to the type II (or gamma) interferon family. In terms of assembly, homodimer. Interacts with IFNGR1 (via extracellular domain); this interaction promotes IFNGR1 dimerization. Released primarily from activated T lymphocytes.

It localises to the secreted. Type II interferon produced by immune cells such as T-cells and NK cells that plays crucial roles in antimicrobial, antiviral, and antitumor responses by activating effector immune cells and enhancing antigen presentation. Primarily signals through the JAK-STAT pathway after interaction with its receptor IFNGR1 to affect gene regulation. Upon IFNG binding, IFNGR1 intracellular domain opens out to allow association of downstream signaling components JAK2, JAK1 and STAT1, leading to STAT1 activation, nuclear translocation and transcription of IFNG-regulated genes. Many of the induced genes are transcription factors such as IRF1 that are able to further drive regulation of a next wave of transcription. Plays a role in class I antigen presentation pathway by inducing a replacement of catalytic proteasome subunits with immunoproteasome subunits. In turn, increases the quantity, quality, and repertoire of peptides for class I MHC loading. Increases the efficiency of peptide generation also by inducing the expression of activator PA28 that associates with the proteasome and alters its proteolytic cleavage preference. Up-regulates as well MHC II complexes on the cell surface by promoting expression of several key molecules such as cathepsins B/CTSB, H/CTSH, and L/CTSL. Participates in the regulation of hematopoietic stem cells during development and under homeostatic conditions by affecting their development, quiescence, and differentiation. This is Interferon gamma (IFNG) from Bubalus carabanensis (Swamp type water buffalo).